The primary structure comprises 38 residues: Photosystem II reaction center protein L (38 aa).

A helical transmembrane segment spans residues 17–37 (GLYWGLLLIFVLAVLFSSYFF).

This sequence belongs to the PsbL family. As to quaternary structure, PSII is composed of 1 copy each of membrane proteins PsbA, PsbB, PsbC, PsbD, PsbE, PsbF, PsbH, PsbI, PsbJ, PsbK, PsbL, PsbM, PsbT, PsbX, PsbY, PsbZ, Psb30/Ycf12, at least 3 peripheral proteins of the oxygen-evolving complex and a large number of cofactors. It forms dimeric complexes.

Its subcellular location is the plastid. It localises to the chloroplast thylakoid membrane. Its function is as follows. One of the components of the core complex of photosystem II (PSII). PSII is a light-driven water:plastoquinone oxidoreductase that uses light energy to abstract electrons from H(2)O, generating O(2) and a proton gradient subsequently used for ATP formation. It consists of a core antenna complex that captures photons, and an electron transfer chain that converts photonic excitation into a charge separation. This subunit is found at the monomer-monomer interface and is required for correct PSII assembly and/or dimerization. The chain is Photosystem II reaction center protein L from Staurastrum punctulatum (Green alga).